The primary structure comprises 420 residues: LanC-like protein 3 (420 aa).

Belongs to the LanC-like protein family.

The sequence is that of LanC-like protein 3 (Lancl3) from Mus musculus (Mouse).